The following is a 387-amino-acid chain: Deoxyguanosinetriphosphate triphosphohydrolase-like protein (387 aa).

The disordered stretch occupies residues 1-26; sequence MTAPYASDPQRARGRRVKEEESTFRS. Residues 17-26 are compositionally biased toward basic and acidic residues; sequence VKEEESTFRS. The 137-residue stretch at 62-198 folds into the HD domain; the sequence is RLTHSIEVAQ…AAIADDVAYN (137 aa).

It belongs to the dGTPase family. Type 2 subfamily.

The polypeptide is Deoxyguanosinetriphosphate triphosphohydrolase-like protein (Roseobacter denitrificans (strain ATCC 33942 / OCh 114) (Erythrobacter sp. (strain OCh 114))).